Consider the following 1755-residue polypeptide: Transposon Ty1-JR2 Gag-Pol polyprotein (1755 aa).

Low complexity predominate over residues 1–16 (MESQQLSQHSHISHGS). Disordered stretches follow at residues 1-93 (MESQ…MMTQ), 126-173 (PQSQ…RPPP), and 352-421 (GSRN…SKST). Polar residues-rich tracts occupy residues 48–60 (TKANSQQTTTPAS), 71–93 (SPQTAQSHSPQNGPYPQQCMMTQ), and 127–152 (QSQFPQYPSSVGTPLSTPSPESGNTF). The span at 153–165 (TDSSSADSDMTST) shows a compositional bias: low complexity. Residues 299–401 (NNGIHINNKV…NSKSKTARAH (103 aa)) form an RNA-binding region. Positions 402-418 (NVSTSNNSPSTDNDSIS) are enriched in low complexity. Phosphoserine is present on Ser-416. The For protease activity; shared with dimeric partner role is filled by Asp-461. Residues 583–640 (NVHTSESTRKYPYPFIHRMLAHANAQTIRYSLKNNTITYFNESDVDWSSAIDYQCPDC) form an integrase-type zinc finger-like region. Residues 660–835 (NSYEPFQYLH…AGLDISTLLP (176 aa)) form the Integrase catalytic domain. Asp-671 and Asp-736 together coordinate Mg(2+). 3 disordered regions span residues 956–1087 (SKAV…ETEK), 1092–1111 (RSPSIDASPPENNSSHNIVP), and 1130–1186 (DLPL…EDNE). A compositionally biased stretch (low complexity) spans 960–969 (SPTDSTPPST). Positions 1005–1015 (STPQISNIEST) are enriched in polar residues. Positions 1038–1053 (ESSHASKSKDFRHSDS) are enriched in basic and acidic residues. Polar residues-rich tracts occupy residues 1054-1082 (YSENETNHTNVPISSTGGTNNKTVPQISD) and 1101-1111 (PENNSSHNIVP). The short motif at 1178–1212 (KKRSLEDNETEIKVSRDTWNTKNMRSLEPPRSKKR) is the Bipartite nuclear localization signal element. Residues 1338 to 1476 (NNYYITQLDI…DILGLEIKYQ (139 aa)) enclose the Reverse transcriptase Ty1/copia-type domain. Residues Asp-1346, Asp-1427, Asp-1428, Asp-1610, Glu-1652, and Asp-1685 each coordinate Mg(2+). Residues 1610–1752 (DASYGNQPYY…IKTFKLLTNK (143 aa)) form the RNase H Ty1/copia-type domain.

As to quaternary structure, the capsid protein forms a homotrimer, from which the VLPs are assembled. The protease is a homodimer, whose active site consists of two apposed aspartic acid residues. Post-translationally, initially, virus-like particles (VLPs) are composed of the structural unprocessed proteins Gag and Gag-Pol, and also contain the host initiator methionine tRNA (tRNA(i)-Met) which serves as a primer for minus-strand DNA synthesis, and a dimer of genomic Ty RNA. Processing of the polyproteins occurs within the particle and proceeds by an ordered pathway, called maturation. First, the protease (PR) is released by autocatalytic cleavage of the Gag-Pol polyprotein yielding capsid protein p45 and a Pol-p154 precursor protein. This cleavage is a prerequisite for subsequent processing of Pol-p154 at the remaining sites to release the mature structural and catalytic proteins. Maturation takes place prior to the RT reaction and is required to produce transposition-competent VLPs.

Its subcellular location is the cytoplasm. It localises to the nucleus. It carries out the reaction DNA(n) + a 2'-deoxyribonucleoside 5'-triphosphate = DNA(n+1) + diphosphate. The catalysed reaction is Endonucleolytic cleavage to 5'-phosphomonoester.. Functionally, capsid protein (CA) is the structural component of the virus-like particle (VLP), forming the shell that encapsulates the retrotransposons dimeric RNA genome. The particles are assembled from trimer-clustered units and there are holes in the capsid shells that allow for the diffusion of macromolecules. CA also has nucleocapsid-like chaperone activity, promoting primer tRNA(i)-Met annealing to the multipartite primer-binding site (PBS), dimerization of Ty1 RNA and initiation of reverse transcription. In terms of biological role, the aspartyl protease (PR) mediates the proteolytic cleavages of the Gag and Gag-Pol polyproteins after assembly of the VLP. Reverse transcriptase/ribonuclease H (RT) is a multifunctional enzyme that catalyzes the conversion of the retro-elements RNA genome into dsDNA within the VLP. The enzyme displays a DNA polymerase activity that can copy either DNA or RNA templates, and a ribonuclease H (RNase H) activity that cleaves the RNA strand of RNA-DNA heteroduplexes during plus-strand synthesis and hydrolyzes RNA primers. The conversion leads to a linear dsDNA copy of the retrotransposon that includes long terminal repeats (LTRs) at both ends. Its function is as follows. Integrase (IN) targets the VLP to the nucleus, where a subparticle preintegration complex (PIC) containing at least integrase and the newly synthesized dsDNA copy of the retrotransposon must transit the nuclear membrane. Once in the nucleus, integrase performs the integration of the dsDNA into the host genome. The protein is Transposon Ty1-JR2 Gag-Pol polyprotein (TY1B-JR2) of Saccharomyces cerevisiae (strain ATCC 204508 / S288c) (Baker's yeast).